We begin with the raw amino-acid sequence, 503 residues long: Drimenol monooxygenase (503 aa).

A helical membrane pass occupies residues 7–23; sequence MICIVVSGLLLYSSRTS. Serine 471 is a binding site for heme.

The protein belongs to the cytochrome P450 family. Requires heme as cofactor.

It localises to the membrane. The enzyme catalyses (5S,9S,10S)-drim-7-en-11-ol + reduced [NADPH--hemoprotein reductase] + O2 = (5S,10S)-(9R)-7-drimene-11,12-diol + oxidized [NADPH--hemoprotein reductase] + H2O + H(+). In terms of biological role, catalyzes the conversion of drimenol to drimendiol, a precursor of the sesquiterpenoid polygodial. Polygodial has been shown to be an antifeedant for a number of herbivorous insects. This chain is Drimenol monooxygenase, found in Persicaria hydropiper (Marshpepper knotweed).